The following is a 775-amino-acid chain: Mitochondrial 15S rRNA processing factor CCM1 (775 aa).

The N-terminal 18 residues, M1 to R18, are a transit peptide targeting the mitochondrion. The tract at residues H35–L65 is disordered. Residues S41–D55 are compositionally biased toward polar residues. Residues S56–L65 show a composition bias toward basic and acidic residues. 5 PPR repeats span residues P289–I323, S324–Q355, G362–P396, N397–P432, and T433–S467.

This sequence belongs to the CCM1 family. In terms of assembly, binds to mitochondrial small subunit 15S rRNA.

The protein localises to the mitochondrion. In terms of biological role, regulates mitochondrial small subunit maturation by controlling 15S rRNA 5'-end processing. Localizes to the 5' precursor of the 15S rRNA in a position that is subsequently occupied by mS47 in the mature yeast mtSSU. Uses structure and sequence-specific RNA recognition, binding to a single-stranded region of the precursor and specifically recognizing bases -6 to -1. The exchange of Ccm1 for mS47 is coupled to the irreversible removal of precursor rRNA that is accompanied by conformational changes of the mitoribosomal proteins uS5m and mS26. These conformational changes signal completion of 5'-end rRNA processing through protection of the mature 5'-end of the 15S rRNA and stabilization of mS47. The removal of the 5' precursor together with the dissociation of Ccm1 may be catalyzed by the 5'-3' exoribonuclease Pet127. Involved in the specific removal of group I introns in mitochondrial encoded transcripts. In Scheffersomyces stipitis (strain ATCC 58785 / CBS 6054 / NBRC 10063 / NRRL Y-11545) (Yeast), this protein is Mitochondrial 15S rRNA processing factor CCM1 (CCM1).